Here is a 123-residue protein sequence, read N- to C-terminus: Large ribosomal subunit protein bL12 (123 aa).

At Lys84 the chain carries N6-methyllysine. The disordered stretch occupies residues 94–123 (PATLKEGMSKEDGDEAKTKLEEAGASVELK). Positions 100-115 (GMSKEDGDEAKTKLEE) are enriched in basic and acidic residues.

Belongs to the bacterial ribosomal protein bL12 family. As to quaternary structure, homodimer. Part of the ribosomal stalk of the 50S ribosomal subunit. Forms a multimeric L10(L12)X complex, where L10 forms an elongated spine to which 2 to 4 L12 dimers bind in a sequential fashion. Binds GTP-bound translation factors.

Its function is as follows. Seems to be the binding site for several of the factors involved in protein synthesis and appears to be essential for accurate translation. In terms of biological role, forms part of the ribosomal stalk which helps the ribosome interact with GTP-bound translation factors. Is thus essential for accurate translation. This chain is Large ribosomal subunit protein bL12, found in Halophilic eubacterium NRCC 41227.